Here is a 591-residue protein sequence, read N- to C-terminus: 5'-nucleotidase domain-containing protein DDB_G0275467 (591 aa).

Low complexity-rich tracts occupy residues 38–50 (STTTTSGIKSYST) and 68–78 (QHQQQQPQQHQ). A disordered region spans residues 38-88 (STTTTSGIKSYSTHNRSNNDTHTSKSNTIDQHQQQQPQQHQNNDNKHLFTP). Catalysis depends on aspartate 165, which acts as the Nucleophile. 2 residues coordinate Mg(2+): aspartate 165 and aspartate 167. The Proton donor role is filled by aspartate 167. Substrate is bound at residue 305-313 (TAAVGKVHL). Aspartate 450 provides a ligand contact to Mg(2+).

It belongs to the 5'(3')-deoxyribonucleotidase family. Mg(2+) is required as a cofactor.

This is 5'-nucleotidase domain-containing protein DDB_G0275467 from Dictyostelium discoideum (Social amoeba).